The chain runs to 397 residues: F-box protein At3g28330 (397 aa).

An F-box domain is found at 6–56; the sequence is KKDMDFLTEDLWEIILARLPLKSIITTPKLVCKVWKSIIESRCFRDLFQSL.

The polypeptide is F-box protein At3g28330 (Arabidopsis thaliana (Mouse-ear cress)).